The following is a 1050-amino-acid chain: Mitotic checkpoint serine/threonine-protein kinase BUB1 beta (1050 aa).

Residues 62 to 226 (FEYEIRFYTG…FESSVPQRST (165 aa)) enclose the BUB1 N-terminal domain. The Nuclear localization signal motif lies at 111 to 118 (GEKRYYSD). The segment at 152 to 185 (AQFYISWAEEYEARENFRKADAIFQEGIQQKAEP) is necessary for interaction with KNL1. Positions 224–232 (RSTLAELKS) match the D-box motif. The residue at position 250 (Lys250) is an N6-acetyllysine; by PCAF. Position 367 is a phosphoserine (Ser367). The segment at 368 to 393 (TRKPGKEEGDPLQRVQSHQQASEEKK) is disordered. Position 435 is a phosphoserine (Ser435). The disordered stretch occupies residues 456-480 (IQTTQQERTGDQQEETMPTKETTKL). A phosphoserine mark is found at Ser543, Ser665, and Ser670. Phosphoserine; by PLK1 is present on Ser676. Ser697 bears the Phosphoserine mark. The region spanning 766–1050 (YCIKREYLIC…LTSPGALLFQ (285 aa)) is the Protein kinase domain. 772–780 (YLICEDYKL) is a binding site for ATP. Thr792 carries the phosphothreonine; by PLK1 modification. ATP is bound at residue Lys795. The Proton acceptor role is filled by Asp882. Thr1008 carries the phosphothreonine; by PLK1 modification. The residue at position 1042 (Thr1042) is a Phosphothreonine. Ser1043 carries the phosphoserine modification.

The protein belongs to the protein kinase superfamily. Ser/Thr protein kinase family. BUB1 subfamily. In terms of assembly, interacts with CENPE. Interacts with PLK1. Part of a complex containing BUB3, CDC20 and BUB1B. Interacts with anaphase-promoting complex/cyclosome (APC/C). Interacts with KNL1. Interacts with KAT2B. Interacts with RIPK3. Interacts with the closed conformation form of MAD2L1. Proteolytically cleaved by caspase-3 in a cell cycle specific manner. The cleavage might be involved in the durability of the cell cycle delay. Caspase-3 cleavage is associated with abrogation of the mitotic checkpoint. The major site of cleavage is at Asp-610. In terms of processing, acetylation at Lys-250 regulates its degradation and timing in anaphase entry. Post-translationally, ubiquitinated. Degraded by the proteasome. Ubiquitinated by UBR5, promoting disassembly of the mitotic checkpoint complex from the APC/C complex. Sumoylated with SUMO2 and SUMO3. The sumoylation mediates the association with CENPE at the kinetochore. In terms of processing, autophosphorylated in vitro. Intramolecular autophosphorylation is stimulated by CENPE. Phosphorylated during mitosis and hyperphosphorylated in mitotically arrested cells. Phosphorylation at Ser-670 and Ser-1043 occurs at kinetochores upon mitotic entry with dephosphorylation at the onset of anaphase. Highly expressed in thymus followed by spleen. Preferentially expressed in tissues with a high mitotic index.

The protein resides in the cytoplasm. Its subcellular location is the nucleus. It localises to the chromosome. The protein localises to the centromere. It is found in the kinetochore. The protein resides in the cytoskeleton. Its subcellular location is the microtubule organizing center. It localises to the centrosome. It catalyses the reaction L-seryl-[protein] + ATP = O-phospho-L-seryl-[protein] + ADP + H(+). It carries out the reaction L-threonyl-[protein] + ATP = O-phospho-L-threonyl-[protein] + ADP + H(+). With respect to regulation, kinase activity stimulated by CENPE. In terms of biological role, essential component of the mitotic checkpoint. Required for normal mitosis progression. The mitotic checkpoint delays anaphase until all chromosomes are properly attached to the mitotic spindle. One of its checkpoint functions is to inhibit the activity of the anaphase-promoting complex/cyclosome (APC/C) by blocking the binding of CDC20 to APC/C, independently of its kinase activity. The other is to monitor kinetochore activities that depend on the kinetochore motor CENPE. Required for kinetochore localization of CENPE. Negatively regulates PLK1 activity in interphase cells and suppresses centrosome amplification. Also implicated in triggering apoptosis in polyploid cells that exit aberrantly from mitotic arrest. May play a role for tumor suppression. The sequence is that of Mitotic checkpoint serine/threonine-protein kinase BUB1 beta (BUB1B) from Homo sapiens (Human).